The primary structure comprises 373 residues: MNGTISVLLAGGGTAGHVEPAMAVADALAALEPGVRITALGTERGLETRLVPERGYALELITPVPLPRKLSGDLARLPMRVRRAVRETREILDTVHADVVIGFGGYVALPAYLAARRNRVPIVVHEANASAGLANKVGARFARRVLSAVADPGLGRVEVVGTPVRSSITELDRAALRAEARAHFGFADDARVLLVFGGSQGARSLNNVVSGAAKALAAAGISVLHAYGAKNTLELPDPAPGDPPYVAVPYLSRMDLAYAAADLAICRSGAMTVAEVTAVGLPAVYVPLPIGNGEQRLNARPVVETGGGLVVDDADLSPQFVADTVVPLLTDTGRLQTMTAGAALSGHRDAARHVAHVALDVAREAAGGRKGVR.

UDP-N-acetyl-alpha-D-glucosamine is bound by residues 14 to 16 (TAG), N128, R165, S199, and Q295.

The protein belongs to the glycosyltransferase 28 family. MurG subfamily.

The protein resides in the cell membrane. The enzyme catalyses di-trans,octa-cis-undecaprenyl diphospho-N-acetyl-alpha-D-muramoyl-L-alanyl-D-glutamyl-meso-2,6-diaminopimeloyl-D-alanyl-D-alanine + UDP-N-acetyl-alpha-D-glucosamine = di-trans,octa-cis-undecaprenyl diphospho-[N-acetyl-alpha-D-glucosaminyl-(1-&gt;4)]-N-acetyl-alpha-D-muramoyl-L-alanyl-D-glutamyl-meso-2,6-diaminopimeloyl-D-alanyl-D-alanine + UDP + H(+). The protein operates within cell wall biogenesis; peptidoglycan biosynthesis. Its function is as follows. Cell wall formation. Catalyzes the transfer of a GlcNAc subunit on undecaprenyl-pyrophosphoryl-MurNAc-pentapeptide (lipid intermediate I) to form undecaprenyl-pyrophosphoryl-MurNAc-(pentapeptide)GlcNAc (lipid intermediate II). The protein is UDP-N-acetylglucosamine--N-acetylmuramyl-(pentapeptide) pyrophosphoryl-undecaprenol N-acetylglucosamine transferase of Mycobacterium sp. (strain KMS).